The sequence spans 423 residues: Keratin, type I cytoskeletal 18 (423 aa).

Serine 2 carries the N-acetylserine modification. Positions 2–71 are head; sequence SFTTRSTTFS…GLAGMGGIQT (70 aa). Serine 7, serine 11, serine 16, and serine 19 each carry phosphoserine. Serine 31 and serine 32 each carry phosphoserine; alternate. Residues serine 31 and serine 32 are each glycosylated (O-linked (GlcNAc) serine; alternate). Phosphoserine is present on serine 35. Tyrosine 37 carries the post-translational modification Phosphotyrosine. Serine 43 carries the post-translational modification Phosphoserine. Omega-N-methylarginine is present on arginine 46. Position 50 is a phosphoserine; alternate (serine 50). Serine 50 carries an O-linked (GlcNAc) serine; alternate glycan. The residue at position 52 (serine 52) is a Phosphoserine; by MAPKAPK2 and MAPKAPK3. Residues serine 57 and serine 60 each carry the phosphoserine modification. Positions 62-366 are necessary for interaction with PNN; that stretch reads GLAGMGGIQT…EALLNIKVKL (305 aa). The interaction with TRADD stretch occupies residues 69-121; it reads IQTEKETMQDLNDRLASYLDKVKSLETENRRLESKIREHLEKKGPQGVRDWGH. The coil 1A stretch occupies residues 72 to 107; it reads EKETMQDLNDRLASYLDKVKSLETENRRLESKIREH. An IF rod domain is found at 72 to 384; that stretch reads EKETMQDLND…RLLEDGEDFS (313 aa). Residue lysine 73 forms a Glycyl lysine isopeptide (Lys-Gly) (interchain with G-Cter in SUMO2) linkage. Residues serine 85 and serine 92 each carry the phosphoserine modification. Residues 108–125 are linker 1; it reads LEKKGPQGVRDWGHYFKI. Lysine 124 is subject to N6-acetyllysine. The coil 1B stretch occupies residues 126 to 217; the sequence is IEDLRAQIFA…KNHEEEVQGL (92 aa). A phosphoserine mark is found at serine 137 and serine 170. A linker 12 region spans residues 218 to 241; the sequence is EAQIASSGLTVEVDAPKSQDLSKI. Residues 236–384 form an interaction with DNAJB6 region; sequence QDLSKIMADI…RLLEDGEDFS (149 aa). Residue lysine 240 forms a Glycyl lysine isopeptide (Lys-Gly) (interchain with G-Cter in SUMO2) linkage. The tract at residues 242 to 380 is coil 2; sequence MADIRAQYEA…ATYRRLLEDG (139 aa). Phosphothreonine is present on threonine 295. Serine 316 carries the phosphoserine modification. Glycyl lysine isopeptide (Lys-Gly) (interchain with G-Cter in SUMO2) cross-links involve residues lysine 363 and lysine 365. The segment at 381–423 is tail; that stretch reads EDFSLNDALDSSNSMQTVQKTTTRKIVDGRVVSETNDTRVLRH. Residues serine 384, serine 391, serine 392, and serine 394 each carry the phosphoserine modification. The residue at position 397 (threonine 397) is a Phosphothreonine.

It belongs to the intermediate filament family. Heterotetramer of two type I and two type II keratins. KRT18 associates with KRT8. Interacts with PLEC isoform 1C, when in a heterodimer with KRT8. Interacts with PNN and mutated CFTR. Interacts with YWHAE, YWHAH and YWHAZ only when phosphorylated. Interacts with the thrombin-antithrombin complex. Interacts with DNAJB6, TCHP and TRADD. Interacts with FAM83H. Interacts with EPPK1. Interacts with PKP1 and PKP2. Post-translationally, phosphorylation increases by IL-6. In terms of processing, proteolytically cleaved by caspases during epithelial cell apoptosis. Cleavage occurs at Asp-231 by either caspase-3, caspas-6 or caspase-7. O-GlcNAcylation increases solubility, and decreases stability by inducing proteasomal degradation. As to expression, expressed in endoderm, intestinal epithelial cells and in most extraembryonic tissues.

The protein localises to the nucleus matrix. The protein resides in the cytoplasm. Its subcellular location is the perinuclear region. It localises to the nucleus. It is found in the nucleolus. When phosphorylated, plays a role in filament reorganization. Involved in the delivery of mutated CFTR to the plasma membrane. Involved in the uptake of thrombin-antithrombin complexes by hepatic cells. Together with KRT8, is involved in interleukin-6 (IL-6)-mediated barrier protection. The sequence is that of Keratin, type I cytoskeletal 18 (Krt18) from Mus musculus (Mouse).